The sequence spans 310 residues: Ribosomal RNA small subunit methyltransferase H (310 aa).

S-adenosyl-L-methionine-binding positions include 32–34 (AGH), Asp-52, Phe-79, Asp-100, and Gln-107.

Belongs to the methyltransferase superfamily. RsmH family.

It is found in the cytoplasm. The enzyme catalyses cytidine(1402) in 16S rRNA + S-adenosyl-L-methionine = N(4)-methylcytidine(1402) in 16S rRNA + S-adenosyl-L-homocysteine + H(+). Its function is as follows. Specifically methylates the N4 position of cytidine in position 1402 (C1402) of 16S rRNA. This is Ribosomal RNA small subunit methyltransferase H from Bacillus pumilus (strain SAFR-032).